Reading from the N-terminus, the 239-residue chain is Large ribosomal subunit protein uL1 (239 aa).

Belongs to the universal ribosomal protein uL1 family. Part of the 50S ribosomal subunit.

Binds directly to 23S rRNA. The L1 stalk is quite mobile in the ribosome, and is involved in E site tRNA release. Its function is as follows. Protein L1 is also a translational repressor protein, it controls the translation of the L11 operon by binding to its mRNA. The polypeptide is Large ribosomal subunit protein uL1 (Rickettsia rickettsii (strain Iowa)).